A 605-amino-acid polypeptide reads, in one-letter code: Proline--tRNA ligase (605 aa).

It belongs to the class-II aminoacyl-tRNA synthetase family. ProS type 1 subfamily. In terms of assembly, homodimer.

Its subcellular location is the cytoplasm. It catalyses the reaction tRNA(Pro) + L-proline + ATP = L-prolyl-tRNA(Pro) + AMP + diphosphate. Catalyzes the attachment of proline to tRNA(Pro) in a two-step reaction: proline is first activated by ATP to form Pro-AMP and then transferred to the acceptor end of tRNA(Pro). As ProRS can inadvertently accommodate and process non-cognate amino acids such as alanine and cysteine, to avoid such errors it has two additional distinct editing activities against alanine. One activity is designated as 'pretransfer' editing and involves the tRNA(Pro)-independent hydrolysis of activated Ala-AMP. The other activity is designated 'posttransfer' editing and involves deacylation of mischarged Ala-tRNA(Pro). The misacylated Cys-tRNA(Pro) is not edited by ProRS. This chain is Proline--tRNA ligase, found in Bifidobacterium adolescentis (strain ATCC 15703 / DSM 20083 / NCTC 11814 / E194a).